The following is a 550-amino-acid chain: Chaperonin GroEL (550 aa).

Residues Thr30–Pro33, Lys51, Asp87–Thr91, Gly416, Asn480–Ala482, and Asp496 each bind ATP. The segment at Leu525–Met550 is disordered. A compositionally biased stretch (gly residues) spans Gly534–Met550.

This sequence belongs to the chaperonin (HSP60) family. As to quaternary structure, forms a cylinder of 14 subunits composed of two heptameric rings stacked back-to-back. Interacts with the co-chaperonin GroES.

Its subcellular location is the cytoplasm. It carries out the reaction ATP + H2O + a folded polypeptide = ADP + phosphate + an unfolded polypeptide.. Together with its co-chaperonin GroES, plays an essential role in assisting protein folding. The GroEL-GroES system forms a nano-cage that allows encapsulation of the non-native substrate proteins and provides a physical environment optimized to promote and accelerate protein folding. The polypeptide is Chaperonin GroEL (Halorhodospira halophila (strain DSM 244 / SL1) (Ectothiorhodospira halophila (strain DSM 244 / SL1))).